Consider the following 313-residue polypeptide: Serine/threonine-protein phosphatase PP2A-3 catalytic subunit (313 aa).

Mn(2+) contacts are provided by Asp61, His63, Asp89, and Asn121. Catalysis depends on His122, which acts as the Proton donor. Mn(2+)-binding residues include His171 and His245. Position 313 is a leucine methyl ester (Leu313).

The protein belongs to the PPP phosphatase family. PP-2A subfamily. In terms of assembly, PP2A consists of a common heterodimeric core enzyme, composed of a 36 kDa catalytic subunit (subunit C) and a 65 kDa constant regulatory subunit (subunit A), that associates with a variety of regulatory subunits such as subunits B (the R2/B/PR55/B55, R3/B''/PR72/PR130/PR59 and R5/B'/B56 families). Interacts with ACR4. Interacts with TAP46. Interacts with SIC/RON3. It depends on Mn(2+) as a cofactor. Reversibly methyl esterified on Leu-313 by leucine carboxyl methyltransferase 1 (LCMT1) and pectin methylesterase 1 (PME1). Carboxyl methylation influences the affinity of the catalytic subunit for the different regulatory subunits, thereby modulating the PP2A holoenzyme's substrate specificity, enzyme activity and cellular localization. Post-translationally, phosphorylation of either threonine (by autophosphorylation-activated protein kinase) or tyrosine results in inactivation of the phosphatase. Auto-dephosphorylation has been suggested as a mechanism for reactivation.

Its subcellular location is the cytoplasm. It carries out the reaction O-phospho-L-seryl-[protein] + H2O = L-seryl-[protein] + phosphate. The catalysed reaction is O-phospho-L-threonyl-[protein] + H2O = L-threonyl-[protein] + phosphate. Its function is as follows. Functions redundantly with PP2A4, and is involved in establishing auxin gradients, apical-basal axis of polarity and root and shoot apical meristem during embryogenesis. May dephosphorylate PIN1 and regulate its subcellular distribution for polar auxin transport. Involved in the regulation of formative cell division in roots by dephosphorylating ACR4 protein kinase. This is Serine/threonine-protein phosphatase PP2A-3 catalytic subunit from Arabidopsis thaliana (Mouse-ear cress).